We begin with the raw amino-acid sequence, 144 residues long: 3-dehydroquinate dehydratase (144 aa).

Y24 serves as the catalytic Proton acceptor. Residues N73, H79, and D86 each coordinate substrate. H99 functions as the Proton donor in the catalytic mechanism. Substrate contacts are provided by residues 100 to 101 and R110; that span reads LS.

Belongs to the type-II 3-dehydroquinase family. In terms of assembly, homododecamer.

The enzyme catalyses 3-dehydroquinate = 3-dehydroshikimate + H2O. Its pathway is metabolic intermediate biosynthesis; chorismate biosynthesis; chorismate from D-erythrose 4-phosphate and phosphoenolpyruvate: step 3/7. Its function is as follows. Catalyzes a trans-dehydration via an enolate intermediate. This chain is 3-dehydroquinate dehydratase, found in Shewanella sp. (strain ANA-3).